We begin with the raw amino-acid sequence, 199 residues long: Lysine exporter LysE (199 aa).

A run of 5 helical transmembrane segments spans residues 6 to 26, 42 to 62, 68 to 88, 144 to 164, and 178 to 198; these read VVGF…NAFV, LCTV…GALI, ALNV…LLAA, WLFG…LGFG, and WRIL…SLTV.

This sequence belongs to the LysE/ArgO transporter (TC 2.A.75) family.

The protein localises to the cell inner membrane. Catalyzes the efflux of L-lysine. The protein is Lysine exporter LysE of Mycobacterium bovis (strain ATCC BAA-935 / AF2122/97).